The sequence spans 134 residues: Early E3B 14.9 kDa protein (134 aa).

A signal peptide spans 1–19; that stretch reads MQAMLPVILILLLPCIALA. Residues 54–78 form a helical membrane-spanning segment; it reads YWIVIVGIINILSCTFFSITIYPTF.

It belongs to the adenoviridae E3_14 family. Post-translationally, phosphorylated on serine; O-glycosylated, but not N-glycosylated.

It localises to the host membrane. Functionally, down-regulates the EGF receptor and prevents cytolysis by TNF. The sequence is that of Early E3B 14.9 kDa protein from Homo sapiens (Human).